The sequence spans 387 residues: Calcium sensing receptor, chloroplastic (387 aa).

Residues 1–33 constitute a chloroplast transit peptide; it reads MAMAEMATKSSLSAKLTLPSSSTKKTLSLRQVS. Residues 34–186 are Lumenal, thylakoid-facing; the sequence is VSLPTSTSIS…TMDTISSADP (153 aa). Residues 187–207 traverse the membrane as a helical segment; the sequence is SVIVVAAGAAFLAYLLLPPVF. Residues 208–387 lie on the Stromal side of the membrane; that stretch reads SAISFNFRGY…SGTKFLPSSD (180 aa). Residues 231–352 form the Rhodanese domain; the sequence is CTKNYLMVDI…WLQSRLGTDS (122 aa). The residue at position 380 (threonine 380) is a Phosphothreonine.

Post-translationally, phosphorylation seems to be light-dependent. Predominantly expressed in the shoot, including guard cells.

It is found in the plastid. It localises to the chloroplast thylakoid membrane. Modulates cytoplasmic Ca(2+) concentration and is crucial for proper stomatal regulation in response to elevated levels of external Ca(2+). May function by regulating concentrations of inositol 1,4,5-trisphosphate (IP3), which in turn triggers release of Ca(2+) from internal stores. May play a role in de-etiolation. This is Calcium sensing receptor, chloroplastic (CAS) from Arabidopsis thaliana (Mouse-ear cress).